A 660-amino-acid polypeptide reads, in one-letter code: Bifunctional polymyxin resistance protein ArnA (660 aa).

Residues 1–304 form a formyltransferase ArnAFT region; sequence MKTVVFAYHD…TLGLVQGSRL (304 aa). A (6R)-10-formyltetrahydrofolate-binding site is contributed by 86–88; the sequence is HLI. Residue His-104 is the Proton donor; for formyltransferase activity of the active site. (6R)-10-formyltetrahydrofolate contacts are provided by residues Arg-114 and 136 to 140; that span reads VKRAD. The interval 314 to 660 is dehydrogenase ArnADH; it reads RRTRVLILGV…RTVDLTDKPS (347 aa). NAD(+) is bound by residues Asp-347 and 368–369; that span reads DI. UDP-alpha-D-glucuronate is bound by residues Ala-393, Tyr-398, and 432 to 433; that span reads TS. Glu-434 functions as the Proton acceptor; for decarboxylase activity in the catalytic mechanism. Residues Arg-460, Asn-492, 526 to 535, and Tyr-613 each bind UDP-alpha-D-glucuronate; that span reads KLIDGGKQKR. Arg-619 serves as the catalytic Proton donor; for decarboxylase activity.

It in the N-terminal section; belongs to the Fmt family. UDP-L-Ara4N formyltransferase subfamily. This sequence in the C-terminal section; belongs to the NAD(P)-dependent epimerase/dehydratase family. UDP-glucuronic acid decarboxylase subfamily. In terms of assembly, homohexamer, formed by a dimer of trimers.

The catalysed reaction is UDP-alpha-D-glucuronate + NAD(+) = UDP-beta-L-threo-pentopyranos-4-ulose + CO2 + NADH. The enzyme catalyses UDP-4-amino-4-deoxy-beta-L-arabinose + (6R)-10-formyltetrahydrofolate = UDP-4-deoxy-4-formamido-beta-L-arabinose + (6S)-5,6,7,8-tetrahydrofolate + H(+). It participates in nucleotide-sugar biosynthesis; UDP-4-deoxy-4-formamido-beta-L-arabinose biosynthesis; UDP-4-deoxy-4-formamido-beta-L-arabinose from UDP-alpha-D-glucuronate: step 1/3. It functions in the pathway nucleotide-sugar biosynthesis; UDP-4-deoxy-4-formamido-beta-L-arabinose biosynthesis; UDP-4-deoxy-4-formamido-beta-L-arabinose from UDP-alpha-D-glucuronate: step 3/3. Its pathway is bacterial outer membrane biogenesis; lipopolysaccharide biosynthesis. Functionally, bifunctional enzyme that catalyzes the oxidative decarboxylation of UDP-glucuronic acid (UDP-GlcUA) to UDP-4-keto-arabinose (UDP-Ara4O) and the addition of a formyl group to UDP-4-amino-4-deoxy-L-arabinose (UDP-L-Ara4N) to form UDP-L-4-formamido-arabinose (UDP-L-Ara4FN). The modified arabinose is attached to lipid A and is required for resistance to polymyxin and cationic antimicrobial peptides. The protein is Bifunctional polymyxin resistance protein ArnA of Escherichia coli O127:H6 (strain E2348/69 / EPEC).